Reading from the N-terminus, the 242-residue chain is UPF0309 protein BAbS19_II03080 (242 aa).

The SIS domain maps to 30–214 (AADLIAAAAR…ARLVGEGDAP (185 aa)).

It belongs to the UPF0309 family.

This Brucella abortus (strain S19) protein is UPF0309 protein BAbS19_II03080.